Reading from the N-terminus, the 1978-residue chain is Sodium channel protein type 8 subunit alpha (1978 aa).

Disordered stretches follow at residues 1-20 (MAAR…FTPE) and 28-62 (RIAE…LEAG). Residues 1–132 (MAARLLAPPG…RIAIKILIHS (132 aa)) are Cytoplasmic-facing. Over residues 28–61 (RIAESKLKKPPKADGSHREDDEDSKPKPNSDLEA) the composition is skewed to basic and acidic residues. Residues 114–442 (ILSPFNLIRR…KAMLEQLKKQ (329 aa)) form an I repeat. Residues 133 to 151 (VFSMIIMCTILTNCVFMTF) traverse the membrane as a helical segment. At 152–158 (SNPPEWS) the chain is on the extracellular side. The chain crosses the membrane as a helical span at residues 159–179 (KNVEYTFTGIYTFESLVKIIA). Over 180-193 (RGFCIDGFTFLRDP) the chain is Cytoplasmic. A helical membrane pass occupies residues 194–211 (WNWLDFSVIMMAYVTEFV). Residues 212 to 217 (DLGNVS) lie on the Extracellular side of the membrane. N-linked (GlcNAc...) asparagine glycosylation occurs at Asn-215. Residues 218 to 234 (ALRTFRVLRALKTISVI) traverse the membrane as a helical segment. Over 235 to 253 (PGLKTIVGALIQSVKKLSD) the chain is Cytoplasmic. Residues 254-273 (VMILTVFCLSVFALIGLQLF) traverse the membrane as a helical segment. The Extracellular portion of the chain corresponds to 274-355 (MGNLRNKCVV…PNYGYTSFDT (82 aa)). Cys-281 and Cys-333 are joined by a disulfide. 4 N-linked (GlcNAc...) asparagine glycosylation sites follow: Asn-289, Asn-295, Asn-308, and Asn-326. The pore-forming intramembrane region spans 356–380 (FSWAFLALFRLMTQDYWENLYQLTL). Residue Glu-373 coordinates Na(+). Residues 381 to 387 (RAAGKTY) are Extracellular-facing. The helical transmembrane segment at 388-408 (MIFFVLVIFVGSFYLVNLILA) threads the bilayer. At 409–751 (VVAMAYEEQN…EIVNLIVMDP (343 aa)) the chain is on the cytoplasmic side. 2 disordered regions span residues 446-530 (AQAA…KAFR) and 576-597 (DPGS…SEGR). Residues 473-486 (SPRSSSELSKLSSK) are compositionally biased toward low complexity. Basic residues predominate over residues 489–500 (KERRNRRKKRKQ). Composition is skewed to basic and acidic residues over residues 501 to 530 (KELS…KAFR) and 586 to 597 (DEHSTVEESEGR). 2 positions are modified to phosphoserine: Ser-518 and Ser-520. Residues 733–1005 (CHPYWIKLKE…QISVIRIKKG (273 aa)) form an II repeat. The helical transmembrane segment at 752-770 (FVDLAITICIVLNTLFMAM) threads the bilayer. Topologically, residues 771–781 (EHHPMTPQFEH) are extracellular. The chain crosses the membrane as a helical span at residues 782–801 (VLAVGNLVFTGIFTAEMFLK). Residues 802 to 815 (LIAMDPYYYFQEGW) are Cytoplasmic-facing. A helical membrane pass occupies residues 816–835 (NIFDGFIVSLSLMELSLADV). Over 836 to 837 (EG) the chain is Extracellular. The helical transmembrane segment at 838-855 (LSVLRSFRLLRVFKLAKS) threads the bilayer. The Cytoplasmic portion of the chain corresponds to 856–871 (WPTLNMLIKIIGNSVG). The helical transmembrane segment at 872 to 890 (ALGNLTLVLAIIVFIFAVV) threads the bilayer. At 891-919 (GMQLFGKSYKECVCKINQECKLPRWHMND) the chain is on the extracellular side. Cys-904 and Cys-910 are oxidised to a cystine. An intramembrane region (pore-forming) is located at residues 920–940 (FFHSFLIVFRVLCGEWIETMW). The Na(+) site is built by Glu-934 and Glu-937. Topologically, residues 941–953 (DCMEVAGQAMCLI) are extracellular. A disulfide bridge connects residues Cys-942 and Cys-951. A helical membrane pass occupies residues 954–974 (VFMMVMVIGNLVVLNLFLALL). Residues 975 to 1197 (LSSFSADNLA…TCFLIVEHNW (223 aa)) are Cytoplasmic-facing. A disordered region spans residues 1105–1146 (NLNTEDVSSESDPEGSKDKLDDTSSSEGSTIDIKPEVEEVPV). The III repeat unit spans residues 1178-1493 (LGKSWWILRK…KKYYNAMKKL (316 aa)). Residues 1198–1215 (FETFIIFMILLSSGALAF) traverse the membrane as a helical segment. The Extracellular segment spans residues 1216–1228 (EDIYIEQRKTIRT). The helical transmembrane segment at 1229-1247 (ILEYADKVFTYIFILEMLL) threads the bilayer. Topologically, residues 1248–1261 (KWTAYGFVKFFTNA) are cytoplasmic. The helical transmembrane segment at 1262 to 1280 (WCWLDFLIVAVSLVSLIAN) threads the bilayer. The Extracellular portion of the chain corresponds to 1281 to 1288 (ALGYSELG). A helical transmembrane segment spans residues 1289–1307 (AIKSLRTLRALRPLRALSR). Residues 1308 to 1324 (FEGMRVVVNALVGAIPS) lie on the Cytoplasmic side of the membrane. Residues 1325–1344 (IMNVLLVCLIFWLIFSIMGV) form a helical membrane-spanning segment. Topologically, residues 1345–1397 (NLFAGKYHYCFNETSEIRFEIDIVNNKTDCEKLMEGNSTEIRWKNVKINFDNV) are extracellular. Cysteines 1354 and 1374 form a disulfide. 3 N-linked (GlcNAc...) asparagine glycosylation sites follow: Asn-1356, Asn-1370, and Asn-1381. Residues 1398 to 1419 (GAGYLALLQVATFKGWMDIMYA) constitute an intramembrane region (pore-forming). The Extracellular segment spans residues 1420-1436 (AVDSRKPDEQPDYEGNI). The helical transmembrane segment at 1437–1458 (YMYIYFVIFIIFGSFFTLNLFI) threads the bilayer. The Cytoplasmic portion of the chain corresponds to 1459 to 1521 (GVIIDNFNQQ…IVFDFVTQQA (63 aa)). Ser-1495 is modified (phosphoserine; by PKC). An IV repeat occupies 1502–1799 (IPRPLNKIQG…WEKFDPDATQ (298 aa)). A helical transmembrane segment spans residues 1522 to 1539 (FDIVIMMLICLNMVTMMV). Topologically, residues 1540–1550 (ETDTQSKQMEN) are extracellular. Residues 1551–1569 (ILYWINLVFVIFFTCECVL) traverse the membrane as a helical segment. Residues 1570-1581 (KMFALRHYYFTI) are Cytoplasmic-facing. The helical transmembrane segment at 1582 to 1599 (GWNIFDFVVVILSIVGMF) threads the bilayer. Topologically, residues 1600 to 1612 (LADIIEKYFVSPT) are extracellular. A helical transmembrane segment spans residues 1613 to 1629 (LFRVIRLARIGRILRLI). At 1630–1648 (KGAKGIRTLLFALMMSLPA) the chain is on the cytoplasmic side. A helical membrane pass occupies residues 1649–1666 (LFNIGLLLFLVMFIFSIF). Residues 1667–1688 (GMSNFAYVKHEAGIDDMFNFET) are Extracellular-facing. An intramembrane region (pore-forming) is located at residues 1689–1711 (FGNSMICLFQITTSAGWDGLLLP). Residues 1712–1740 (ILNRPPDCSLDKEHPGSGFKGDCGNPSVG) are Extracellular-facing. Cys-1719 and Cys-1734 are joined by a disulfide. A helical transmembrane segment spans residues 1741–1763 (IFFFVSYIIISFLIVVNMYIAII). Over 1764–1978 (LENFSVATEE…RQKEVRESKC (215 aa)) the chain is Cytoplasmic. An IQ domain is found at 1893–1922 (EEVSAVVLQRAYRGHLARRGFICRKMASNK). Positions 1923–1978 (LENGGTHRDKKESTPSTASLPSYDSVTKPDKEKQQRAEEGRRERAKRQKEVRESKC) are disordered. Residues 1936 to 1947 (TPSTASLPSYDS) show a composition bias toward polar residues. Positions 1949 to 1978 (TKPDKEKQQRAEEGRRERAKRQKEVRESKC) are enriched in basic and acidic residues.

Belongs to the sodium channel (TC 1.A.1.10) family. Nav1.6/SCN8A subfamily. In terms of assembly, the voltage-sensitive sodium channel consists of an ion-conducting pore-forming alpha subunit regulated by one or more beta-1 (SCN1B), beta-2 (SCN2B), beta-3 (SCN3B) and/or beta-4 (SCN4B) subunits. Beta-1 (SCN1B) and beta-3 (SCN3B) are non-covalently associated with alpha, while beta-2 (SCN2B) and beta-4 (SCN4B) are covalently linked by disulfide bonds. Interacts with NEDD4 and NEDD4L. Interacts with FGF13. Interacts with FGF14, GBG3, GBB2 and SCN1B. Interacts with TMEM233. Interacts with the conotoxin GVIIJ. Interacts with CALM1; the interaction modulates the inactivation rate of SCN8A. In terms of processing, may be ubiquitinated by NEDD4L; which would promote its endocytosis. Post-translationally, phosphorylation at Ser-1495 by PKC in a highly conserved cytoplasmic loop slows inactivation of the sodium channel and reduces peak sodium currents. As to expression, isoform 1 is highly expressed in brain, moderately in spinal cord, and at low levels in dorsal root ganglia, nodose ganglia and superior cervical ganglia. Not detected in sciatic nerve and non-neuronal tissues. Isoform 2 is hardly detectable, if at all, in brain, expressed at low levels in spinal cord and at highest levels in dorsal root ganglia.

The protein localises to the cell membrane. It localises to the cell projection. Its subcellular location is the axon. The catalysed reaction is Na(+)(in) = Na(+)(out). Functionally, pore-forming subunit of a voltage-gated sodium channel complex assuming opened or closed conformations in response to the voltage difference across membranes and through which sodium ions selectively pass along their electrochemical gradient. Contributes to neuronal excitability by regulating action potential threshold and propagation. In Rattus norvegicus (Rat), this protein is Sodium channel protein type 8 subunit alpha.